The following is an 880-amino-acid chain: Valine--tRNA ligase (880 aa).

Residues 48 to 58 (PNITGKLHLGH) carry the 'HIGH' region motif. A 'KMSKS' region motif is present at residues 527-531 (KMSKS). K530 provides a ligand contact to ATP. 2 coiled-coil regions span residues 717–741 (KEEL…AIRN) and 810–880 (LFDL…KSLK).

This sequence belongs to the class-I aminoacyl-tRNA synthetase family. ValS type 1 subfamily. As to quaternary structure, monomer.

It is found in the cytoplasm. It carries out the reaction tRNA(Val) + L-valine + ATP = L-valyl-tRNA(Val) + AMP + diphosphate. In terms of biological role, catalyzes the attachment of valine to tRNA(Val). As ValRS can inadvertently accommodate and process structurally similar amino acids such as threonine, to avoid such errors, it has a 'posttransfer' editing activity that hydrolyzes mischarged Thr-tRNA(Val) in a tRNA-dependent manner. The protein is Valine--tRNA ligase of Clostridium tetani (strain Massachusetts / E88).